We begin with the raw amino-acid sequence, 138 residues long: Large ribosomal subunit protein uL16 (138 aa).

Belongs to the universal ribosomal protein uL16 family. In terms of assembly, part of the 50S ribosomal subunit.

In terms of biological role, binds 23S rRNA and is also seen to make contacts with the A and possibly P site tRNAs. This chain is Large ribosomal subunit protein uL16, found in Mycoplasma genitalium (strain ATCC 33530 / DSM 19775 / NCTC 10195 / G37) (Mycoplasmoides genitalium).